Reading from the N-terminus, the 290-residue chain is Ribosomal RNA small subunit methyltransferase A (290 aa).

Residues Asn-27, Leu-29, Gly-54, Glu-75, Asp-100, and Asn-125 each contribute to the S-adenosyl-L-methionine site.

This sequence belongs to the class I-like SAM-binding methyltransferase superfamily. rRNA adenine N(6)-methyltransferase family. RsmA subfamily.

The protein resides in the cytoplasm. The enzyme catalyses adenosine(1518)/adenosine(1519) in 16S rRNA + 4 S-adenosyl-L-methionine = N(6)-dimethyladenosine(1518)/N(6)-dimethyladenosine(1519) in 16S rRNA + 4 S-adenosyl-L-homocysteine + 4 H(+). Its function is as follows. Specifically dimethylates two adjacent adenosines (A1518 and A1519) in the loop of a conserved hairpin near the 3'-end of 16S rRNA in the 30S particle. May play a critical role in biogenesis of 30S subunits. The sequence is that of Ribosomal RNA small subunit methyltransferase A from Streptococcus sanguinis (strain SK36).